The sequence spans 100 residues: Biogenesis of lysosome-related organelles complex 1 subunit CNL1 (100 aa).

Residues 25–46 (SDRVKSLELEATRLVQRQNELV) are a coiled coil.

It belongs to the BLOC1S4 family. Component of the biogenesis of lysosome-related organelles complex-1 (BLOC-1).

It localises to the cytoplasm. Component of the biogenesis of lysosome-related organelles complex-1 (BLOC-1), a complex that is involved in endosomal cargo sorting. This Candida glabrata (strain ATCC 2001 / BCRC 20586 / JCM 3761 / NBRC 0622 / NRRL Y-65 / CBS 138) (Yeast) protein is Biogenesis of lysosome-related organelles complex 1 subunit CNL1 (CLN1).